Here is an 820-residue protein sequence, read N- to C-terminus: Cell division control protein 48 homolog C (820 aa).

Disordered stretches follow at residues 72–157 (RVKD…RFDL) and 169–188 (LNSSSKKPIGSPAEKNVEVE). The segment covering 76 to 87 (EDEDDNIGDEEG) has biased composition (acidic residues). Residues 85 to 122 (EEGSASQRKKQRRVDEKEEKLQRAEQSHLRKRNMERSV) are a coiled coil. Over residues 97–119 (RVDEKEEKLQRAEQSHLRKRNME) the composition is skewed to basic and acidic residues. Residues 121-142 (SVSSSPSSSSSSEDSGDVSTSE) show a composition bias toward low complexity. ATP-binding positions include 274 to 281 (GPPGCGKT) and 569 to 576 (GPPGCGKT).

This sequence belongs to the AAA ATPase family.

Its subcellular location is the nucleus. The protein localises to the cytoplasm. The protein resides in the cytoskeleton. It localises to the phragmoplast. In terms of biological role, probably functions in cell division and growth processes. Interacts with certain SNAREs as part of specialized membrane fusion events where vesicles from the same organelle fuse (homotypic fusion). The chain is Cell division control protein 48 homolog C (CDC48C) from Arabidopsis thaliana (Mouse-ear cress).